The primary structure comprises 1133 residues: Fas-binding factor 1 (1133 aa).

Disordered stretches follow at residues 89-198 and 211-544; these read LGLK…TPIR and IMAT…VPVQ. The segment covering 102 to 113 has biased composition (basic and acidic residues); sequence AAKDPGKGELPN. Positions 125–134 are enriched in low complexity; that stretch reads KKSLPSPSSS. S142 bears the Phosphoserine mark. Polar residues predominate over residues 165–182; it reads PPVTQSKTASDKSPSTVR. 2 stretches are compositionally biased toward basic and acidic residues: residues 221–245 and 259–276; these read PKAE…DELL and TGEH…RPQD. Residues 277 to 286 show a composition bias toward acidic residues; the sequence is SEDMWGDEDF. Residues 295–310 are compositionally biased toward low complexity; sequence VVSSEGRQSRRQSVSR. Residues 325-336 show a composition bias toward polar residues; it reads SKQSPPMASSPI. The segment covering 415–424 has biased composition (basic and acidic residues); the sequence is ASKEEKEDWL. The span at 459 to 469 shows a compositional bias: polar residues; it reads SGSQPLTSTQG. Positions 473 to 482 are enriched in low complexity; the sequence is AAAGGSSGTT. 2 coiled-coil regions span residues 577–727 and 773–870; these read AELQ…VDAA and IRQR…EEQK. A Glycyl lysine isopeptide (Lys-Gly) (interchain with G-Cter in SUMO2) cross-link involves residue K960. A disordered region spans residues 1062–1085; the sequence is AASSQSALMPPAPTTRWCSQPPTG.

May interact with FAS cytoplasmic domain. Interacts with PARD3. Interacts with TRAPPC14. As to expression, present in various epithelial cells (at protein level).

The protein localises to the cytoplasm. It localises to the cytoskeleton. Its subcellular location is the microtubule organizing center. It is found in the centrosome. The protein resides in the centriole. The protein localises to the spindle pole. It localises to the cell junction. Functionally, keratin-binding protein required for epithelial cell polarization. Involved in apical junction complex (AJC) assembly via its interaction with PARD3. Required for ciliogenesis. This Homo sapiens (Human) protein is Fas-binding factor 1 (FBF1).